A 294-amino-acid chain; its full sequence is Filamin-B (294 aa).

2 Filamin repeats span residues 1–67 (GTRL…KVRV) and 71–163 (GQAG…KAKV). A phosphoserine mark is found at Ser61 and Ser157. Lys160 is covalently cross-linked (Glycyl lysine isopeptide (Lys-Gly) (interchain with G-Cter in ISG15)). Residues 164–198 (TGQRLVGPGSTNETSSILVESVTRSSTETCYSAIP) are hinge 2. Residues 164 to 294 (TGQRLVGPGS…PGSPFHVTVP (131 aa)) are self-association site, tail. Phosphoserine occurs at positions 173 and 184. A Filamin 24 repeat occupies 199 to 293 (KASSDASKVT…IPGSPFHVTV (95 aa)). N6-succinyllysine occurs at positions 210 and 216. Lys268 is subject to N6-acetyllysine.

It belongs to the filamin family. In terms of assembly, homodimer. Interacts with FLNA, FLNC, INPPL1, ITGB1A, ITGB1D, ITGB3, ITGB6, MYOT, MYOZ1, PSEN1 and PSEN2. Interacts with MICALL2. Interacts with RFLNA and RFLNB. Interacts with HTLV-I viral p13 protein. Interacts with ASB2; the interaction targets FLNB for proteasomal degradation. In terms of processing, ISGylation prevents ability to interact with the upstream activators of the JNK cascade and inhibits IFNA-induced JNK signaling. Ubiquitination by a SCF-like complex containing ASB2 leads to proteasomal degradation which promotes muscle differentiation.

The protein resides in the cytoplasm. Its subcellular location is the cell cortex. It localises to the cytoskeleton. It is found in the myofibril. The protein localises to the sarcomere. The protein resides in the z line. In terms of biological role, connects cell membrane constituents to the actin cytoskeleton. May promote orthogonal branching of actin filaments and links actin filaments to membrane glycoproteins. Anchors various transmembrane proteins to the actin cytoskeleton. The polypeptide is Filamin-B (FLNB) (Oryctolagus cuniculus (Rabbit)).